The primary structure comprises 517 residues: Ascochitine biosynthesis cluster MFS transporter (517 aa).

A compositionally biased stretch (basic and acidic residues) spans 1–12; sequence MSPDSRDPEAQR. The tract at residues 1–45 is disordered; it reads MSPDSRDPEAQRDVGLTKNTSSVNIPLESVKTDKTSNASPIMGPG. Asn-19 is a glycosylation site (N-linked (GlcNAc...) asparagine). 12 helical membrane-spanning segments follow: residues 75–95, 111–131, 141–161, 172–192, 204–224, 232–252, 308–328, 347–367, 390–410, 421–441, 457–475, and 485–505; these read WVITWLLSFLNVWVTFSSTIF, VVMTLGVSLTVLGFAVGPLIW, LTPFYFGYAVFCIFQIPVGVA, FFIGFFGTSAMAVTPGVLADI, VYAAAAFIGPIFGPIVGGFVV, WTAWITLILASAFGLAALVFV, ILLLVTLYISLVYGVLYLFFV, ALPLLAVMLGTLAGCLTILFV, LMMVGSVSLPIGLFWFGWTSS, AGFPIGIGLALIWVQGLSFLI, LIRSAVGAAFPLFGAPMYH, and LLGFLSVAMIPIPVAFYYYGP.

The protein belongs to the major facilitator superfamily. CAR1 family.

It is found in the membrane. Functionally, MFS transporter; part of the gene cluster that mediates the biosynthesis the mycotoxin ascochitine, an o-quinone methide that plays a possible protective role against other microbial competitors in nature and is considered to be important for pathogenicity of legume-associated Didymella species. This chain is Ascochitine biosynthesis cluster MFS transporter, found in Didymella fabae (Leaf and pod spot disease fungus).